Reading from the N-terminus, the 279-residue chain is tRNA-cytidine(32) 2-sulfurtransferase (279 aa).

The short motif at 46 to 51 (SGGKDS) is the PP-loop motif element. [4Fe-4S] cluster-binding residues include Cys121, Cys124, and Cys212.

The protein belongs to the TtcA family. In terms of assembly, homodimer. The cofactor is Mg(2+). [4Fe-4S] cluster serves as cofactor.

It localises to the cytoplasm. The enzyme catalyses cytidine(32) in tRNA + S-sulfanyl-L-cysteinyl-[cysteine desulfurase] + AH2 + ATP = 2-thiocytidine(32) in tRNA + L-cysteinyl-[cysteine desulfurase] + A + AMP + diphosphate + H(+). Its pathway is tRNA modification. Its function is as follows. Catalyzes the ATP-dependent 2-thiolation of cytidine in position 32 of tRNA, to form 2-thiocytidine (s(2)C32). The sulfur atoms are provided by the cysteine/cysteine desulfurase (IscS) system. This Marinomonas sp. (strain MWYL1) protein is tRNA-cytidine(32) 2-sulfurtransferase.